A 268-amino-acid polypeptide reads, in one-letter code: Leucyl/phenylalanyl-tRNA--protein transferase (268 aa).

Belongs to the L/F-transferase family.

The protein localises to the cytoplasm. The enzyme catalyses N-terminal L-lysyl-[protein] + L-leucyl-tRNA(Leu) = N-terminal L-leucyl-L-lysyl-[protein] + tRNA(Leu) + H(+). It catalyses the reaction N-terminal L-arginyl-[protein] + L-leucyl-tRNA(Leu) = N-terminal L-leucyl-L-arginyl-[protein] + tRNA(Leu) + H(+). It carries out the reaction L-phenylalanyl-tRNA(Phe) + an N-terminal L-alpha-aminoacyl-[protein] = an N-terminal L-phenylalanyl-L-alpha-aminoacyl-[protein] + tRNA(Phe). Functions in the N-end rule pathway of protein degradation where it conjugates Leu, Phe and, less efficiently, Met from aminoacyl-tRNAs to the N-termini of proteins containing an N-terminal arginine or lysine. This chain is Leucyl/phenylalanyl-tRNA--protein transferase, found in Psychrobacter arcticus (strain DSM 17307 / VKM B-2377 / 273-4).